An 828-amino-acid chain; its full sequence is Glycerol-3-phosphate acyltransferase (828 aa).

The HXXXXD motif motif lies at 309–314; it reads CHRSHI.

It belongs to the GPAT/DAPAT family.

The protein localises to the cell inner membrane. The catalysed reaction is sn-glycerol 3-phosphate + an acyl-CoA = a 1-acyl-sn-glycero-3-phosphate + CoA. It participates in phospholipid metabolism; CDP-diacylglycerol biosynthesis; CDP-diacylglycerol from sn-glycerol 3-phosphate: step 1/3. This is Glycerol-3-phosphate acyltransferase from Pseudomonas putida (strain GB-1).